The primary structure comprises 214 residues: Large ribosomal subunit protein uL3 (214 aa).

Positions 131 to 155 (GAQRTSHGNSRSHRVPGSIGMAQDP) are disordered. The residue at position 153 (Q153) is an N5-methylglutamine.

It belongs to the universal ribosomal protein uL3 family. In terms of assembly, part of the 50S ribosomal subunit. Forms a cluster with proteins L14 and L19. In terms of processing, methylated by PrmB.

One of the primary rRNA binding proteins, it binds directly near the 3'-end of the 23S rRNA, where it nucleates assembly of the 50S subunit. This chain is Large ribosomal subunit protein uL3, found in Neisseria meningitidis serogroup C (strain 053442).